The chain runs to 1631 residues: ABC transporter A family member 6 (1631 aa).

7 helical membrane passes run 25 to 45, 242 to 262, 285 to 305, 317 to 337, 346 to 366, 372 to 392, and 416 to 436; these read ICCE…ILAL, SVFI…DVVI, SWII…VVIF, GIVI…SFIF, FCGL…IFVS, VSVK…SIYI, and ILML…FEKV. The region spanning 491–724 is the ABC transporter 1 domain; that stretch reads ISIRNLRKEF…FGQGYLLTCN (234 aa). 527–534 serves as a coordination point for ATP; the sequence is GPNGCGKS. The next 7 membrane-spanning stretches (helical) occupy residues 866–886, 1047–1067, 1099–1119, 1127–1147, 1158–1178, 1198–1218, and 1242–1262; these read SFFL…ILYK, AIIY…GSFA, WDFF…AGVI, FGSF…LGYL, AVGA…IASL, IIDL…IVFI, and LGTP…WILL. The ABC transporter 2 domain occupies 1309–1544; the sequence is IQFKNLHKLF…FGAGYSIDVK (236 aa). 1347–1354 is a binding site for ATP; that stretch reads GLNGGGKS.

This sequence belongs to the ABC transporter superfamily. ABCA family.

It localises to the membrane. This chain is ABC transporter A family member 6 (abcA6), found in Dictyostelium discoideum (Social amoeba).